The following is a 420-amino-acid chain: FAD-dependent monooxygenase ntnJ (420 aa).

Residues phenylalanine 12–alanine 31 traverse the membrane as a helical segment. FAD-binding residues include glutamate 41 and alanine 54. A glycan (N-linked (GlcNAc...) asparagine) is linked at asparagine 124. Arginine 187 is an active-site residue. N-linked (GlcNAc...) asparagine glycosylation is present at asparagine 264. Aspartate 302 and valine 315 together coordinate FAD.

This sequence belongs to the paxM FAD-dependent monooxygenase family. It depends on FAD as a cofactor.

It localises to the membrane. Its pathway is secondary metabolite biosynthesis; terpenoid biosynthesis. Its function is as follows. FAD-dependent monooxygenase; part of the gene cluster that mediates the biosynthesis of the meroterpenoids nectripenoids A and B, as well as cochliquninone D and isocochliquninone E. The pathway probably begins with the HR-PKS ntnH that catalyzes two chain-extension steps to form a reduced triketide, which then primes the SAT domain in the NR-PKS ntnG to initiate three more cycles of extension to give a linear hexaketide corresponding to the polyketide part of nectripenoids. The FAD-dependent monooxygenase ntnJ then performs an oxidative decarboxylation at C11 of the ntnH/ntnG product, via an electrophilic aromatic hydroxylation with concomitant ipso-decarboxylation. The membrane-bound polyprenyl transferase ntnF then introduces a farnesyl group before the FAD-dependent monooxygenase ntnK functions as the first epoxidase on terminal C12'-C13' olefin, followed by a second epoxidation on C7'-C8' catalyzed by ntnA. The terpene cyclase/mutase ntnI then initiates the sequential tricyclic ring formation through protonation of the terminal epoxide and catalyzes the regioselective and stereoselective 6/6/6-tricyclic ring formation. The cytochrome P450 monooxygenase ntnM may then hydroxylate C1'. This chain is FAD-dependent monooxygenase ntnJ, found in Nectria sp.